The sequence spans 79 residues: Acyl carrier protein (79 aa).

Positions 3-78 (QEILEKVCSI…DAVKFIEEKK (76 aa)) constitute a Carrier domain. Ser-38 is modified (O-(pantetheine 4'-phosphoryl)serine).

It belongs to the acyl carrier protein (ACP) family. 4'-phosphopantetheine is transferred from CoA to a specific serine of apo-ACP by AcpS. This modification is essential for activity because fatty acids are bound in thioester linkage to the sulfhydryl of the prosthetic group.

It localises to the cytoplasm. It functions in the pathway lipid metabolism; fatty acid biosynthesis. In terms of biological role, carrier of the growing fatty acid chain in fatty acid biosynthesis. The chain is Acyl carrier protein from Prochlorococcus marinus (strain MIT 9301).